We begin with the raw amino-acid sequence, 305 residues long: UDP-3-O-acyl-N-acetylglucosamine deacetylase (305 aa).

Zn(2+) is bound by residues histidine 79, histidine 238, and aspartate 242. Histidine 265 functions as the Proton donor in the catalytic mechanism.

Belongs to the LpxC family. It depends on Zn(2+) as a cofactor.

It carries out the reaction a UDP-3-O-[(3R)-3-hydroxyacyl]-N-acetyl-alpha-D-glucosamine + H2O = a UDP-3-O-[(3R)-3-hydroxyacyl]-alpha-D-glucosamine + acetate. Its pathway is glycolipid biosynthesis; lipid IV(A) biosynthesis; lipid IV(A) from (3R)-3-hydroxytetradecanoyl-[acyl-carrier-protein] and UDP-N-acetyl-alpha-D-glucosamine: step 2/6. Functionally, catalyzes the hydrolysis of UDP-3-O-myristoyl-N-acetylglucosamine to form UDP-3-O-myristoylglucosamine and acetate, the committed step in lipid A biosynthesis. The chain is UDP-3-O-acyl-N-acetylglucosamine deacetylase from Shigella dysenteriae serotype 1 (strain Sd197).